A 47-amino-acid polypeptide reads, in one-letter code: Antimicrobial peptide LCI (47 aa).

It is found in the secreted. Functionally, has antibacterial activity against X.oryzae pv oryzae and R.solanacearum, but not E.coli or P.carotovorum subsp carotovorum. May bind DNA or mRNA. In Bacillus subtilis, this protein is Antimicrobial peptide LCI.